The primary structure comprises 307 residues: MVSGSKAGVSPHREIEVMRQSIDDHLAGLLPETDSQDIVSLAMREGVMAPGKRIRPLLMLLAARDLRYQGSMPTLLDLACAVELTHTASLMLDDMPCMDNAELRRGQPTTHKKFGESVAILASVGLLSKAFGLIAATGDLPGERRAQAVNELSTAVGVQGLVLGQFRDLNDAALDRTPDAILSTNHLKTGILFSAMLQIVAIASASSPSTRETLHAFALDFGQAFQLLDDLRDDHPETGKDRNKDAGKSTLVNRLGADAARQKLREHIDSADKHLTFACPQGGAIRQFMHLWFGHHLADWSPVMKIA.

Residues lysine 52, arginine 55, and histidine 86 each contribute to the isopentenyl diphosphate site. Residues aspartate 93 and aspartate 99 each coordinate Mg(2+). Arginine 104 contributes to the (2E,6E)-farnesyl diphosphate binding site. Arginine 105 serves as a coordination point for isopentenyl diphosphate. Residues lysine 188, threonine 189, and glutamine 226 each contribute to the (2E,6E)-farnesyl diphosphate site.

This sequence belongs to the FPP/GGPP synthase family. Requires Mg(2+) as cofactor.

It catalyses the reaction isopentenyl diphosphate + (2E,6E)-farnesyl diphosphate = (2E,6E,10E)-geranylgeranyl diphosphate + diphosphate. Its pathway is isoprenoid biosynthesis; geranylgeranyl diphosphate biosynthesis; geranylgeranyl diphosphate from farnesyl diphosphate and isopentenyl diphosphate: step 1/1. Its function is as follows. Catalyzes the condensation of farnesyl diphosphate (FPP) and isopentenyl diphosphate (IPP) to yield geranylgeranyl diphosphate (GGPP) needed for biosynthesis of carotenoids and diterpenes. The polypeptide is Geranylgeranyl diphosphate synthase (crtE) (Pseudescherichia vulneris (Escherichia vulneris)).